A 180-amino-acid chain; its full sequence is ATP synthase subunit delta (180 aa).

The protein belongs to the ATPase delta chain family. In terms of assembly, F-type ATPases have 2 components, F(1) - the catalytic core - and F(0) - the membrane proton channel. F(1) has five subunits: alpha(3), beta(3), gamma(1), delta(1), epsilon(1). CF(0) has four main subunits: a(1), b(1), b'(1) and c(10-14). The alpha and beta chains form an alternating ring which encloses part of the gamma chain. F(1) is attached to F(0) by a central stalk formed by the gamma and epsilon chains, while a peripheral stalk is formed by the delta, b and b' chains.

Its subcellular location is the cellular thylakoid membrane. F(1)F(0) ATP synthase produces ATP from ADP in the presence of a proton or sodium gradient. F-type ATPases consist of two structural domains, F(1) containing the extramembraneous catalytic core and F(0) containing the membrane proton channel, linked together by a central stalk and a peripheral stalk. During catalysis, ATP synthesis in the catalytic domain of F(1) is coupled via a rotary mechanism of the central stalk subunits to proton translocation. In terms of biological role, this protein is part of the stalk that links CF(0) to CF(1). It either transmits conformational changes from CF(0) to CF(1) or is implicated in proton conduction. The polypeptide is ATP synthase subunit delta (Prochlorococcus marinus (strain MIT 9312)).